A 226-amino-acid chain; its full sequence is Small ribosomal subunit protein uS3 (226 aa).

A KH type-2 domain is found at 39–109; it reads IYKFFDKFTR…KLDVNLKVLT (71 aa).

This sequence belongs to the universal ribosomal protein uS3 family. In terms of assembly, part of the 30S ribosomal subunit. Forms a tight complex with proteins S10 and S14.

Binds the lower part of the 30S subunit head. Binds mRNA in the 70S ribosome, positioning it for translation. The chain is Small ribosomal subunit protein uS3 from Mycoplasmopsis synoviae (strain 53) (Mycoplasma synoviae).